A 315-amino-acid chain; its full sequence is Acetaldehyde dehydrogenase 2 (315 aa).

Position 13 to 16 (13 to 16 (SGNI)) interacts with NAD(+). The Acyl-thioester intermediate role is filled by Cys131. NAD(+) contacts are provided by residues 162–170 (SAGPGTRAN) and Asn290.

The protein belongs to the acetaldehyde dehydrogenase family.

The enzyme catalyses acetaldehyde + NAD(+) + CoA = acetyl-CoA + NADH + H(+). The chain is Acetaldehyde dehydrogenase 2 from Pseudomonas putida (strain W619).